A 476-amino-acid chain; its full sequence is Argininosuccinate lyase (476 aa).

This sequence belongs to the lyase 1 family. Argininosuccinate lyase subfamily.

The protein resides in the cytoplasm. It carries out the reaction 2-(N(omega)-L-arginino)succinate = fumarate + L-arginine. It functions in the pathway amino-acid biosynthesis; L-arginine biosynthesis; L-arginine from L-ornithine and carbamoyl phosphate: step 3/3. This Acaryochloris marina (strain MBIC 11017) protein is Argininosuccinate lyase.